The chain runs to 258 residues: tRNA pseudouridine synthase A (258 aa).

Catalysis depends on Asp52, which acts as the Nucleophile. Tyr110 is a substrate binding site.

This sequence belongs to the tRNA pseudouridine synthase TruA family. Homodimer.

It carries out the reaction uridine(38/39/40) in tRNA = pseudouridine(38/39/40) in tRNA. In terms of biological role, formation of pseudouridine at positions 38, 39 and 40 in the anticodon stem and loop of transfer RNAs. The protein is tRNA pseudouridine synthase A of Francisella tularensis subsp. holarctica (strain LVS).